The following is a 60-amino-acid chain: Large ribosomal subunit protein uL30 (60 aa).

It belongs to the universal ribosomal protein uL30 family. Part of the 50S ribosomal subunit.

In Desulfotalea psychrophila (strain LSv54 / DSM 12343), this protein is Large ribosomal subunit protein uL30.